We begin with the raw amino-acid sequence, 953 residues long: Translation initiation factor IF-2 (953 aa).

Residues 53–368 form a disordered region; it reads AKKAVAGTSE…PVTERKFHEL (316 aa). 2 stretches are compositionally biased toward basic and acidic residues: residues 135 to 151 and 162 to 190; these read FKAE…ERRK and RNDR…RNRQ. Residues 191-214 show a composition bias toward low complexity; it reads EQGNQHRNQGQSQYNQQRQSFNQG. Over residues 236–266 the composition is skewed to basic and acidic residues; sequence RSSEERFKQAKANKEALREQNKRKEQAKLED. Over residues 274–288 the composition is skewed to low complexity; it reads PKPTAKAPATPAPTA. Basic and acidic residues predominate over residues 301–318; sequence ARPDKERDNFDHEEDGPR. Over residues 332–341 the composition is skewed to low complexity; the sequence is NQKNSNWNNN. The tr-type G domain maps to 455–622; the sequence is ERPPVVTIMG…TVLLVAEIQE (168 aa). The G1 stretch occupies residues 464-471; it reads GHVDHGKT. 464–471 is a binding site for GTP; that stretch reads GHVDHGKT. Residues 489 to 493 form a G2 region; sequence GITQH. The G3 stretch occupies residues 510–513; it reads DTPG. Residues 510–514 and 564–567 contribute to the GTP site; these read DTPGH and NKID. The tract at residues 564-567 is G4; sequence NKID. The G5 stretch occupies residues 600–602; it reads SAK.

The protein belongs to the TRAFAC class translation factor GTPase superfamily. Classic translation factor GTPase family. IF-2 subfamily.

The protein localises to the cytoplasm. In terms of biological role, one of the essential components for the initiation of protein synthesis. Protects formylmethionyl-tRNA from spontaneous hydrolysis and promotes its binding to the 30S ribosomal subunits. Also involved in the hydrolysis of GTP during the formation of the 70S ribosomal complex. The sequence is that of Translation initiation factor IF-2 from Streptococcus gordonii (strain Challis / ATCC 35105 / BCRC 15272 / CH1 / DL1 / V288).